Reading from the N-terminus, the 553-residue chain is Fusion glycoprotein F0 (553 aa).

An N-terminal signal peptide occupies residues 1 to 31 (MGPRPSTKNPVPMMLTVRVALVLSCICPANS). Topologically, residues 32-500 (IDGRPLAAAG…VNVKLTSTSA (469 aa)) are extracellular. Disulfide bonds link C76–C199, C338–C347, C362–C370, C394–C399, and C401–C424. N85 carries N-linked (GlcNAc...) asparagine; by host glycosylation. The tract at residues 117 to 141 (FIGAIIGGVALGVATAAQITAAAAL) is fusion peptide. Positions 142-170 (IQAKQNAANILRLKESIAATNEAVHEVTD) form a coiled coil. N-linked (GlcNAc...) asparagine; by host glycosylation is present at N191. N366 is a glycosylation site (N-linked (GlcNAc...) asparagine; by host). Residues N447 and N471 are each glycosylated (N-linked (GlcNAc...) asparagine; by host). The stretch at 466 to 491 (ELGNVNNSISNALNKLEESNSKLDKV) forms a coiled coil. A helical transmembrane segment spans residues 501–521 (LITYIVLTIISLVFGILSLVL). The Cytoplasmic segment spans residues 522–553 (ACYLMYKQKAQQKTLLWLGNNTLDQMRATTKM). C523 carries S-palmitoyl cysteine; by host lipidation.

Belongs to the paramyxoviruses fusion glycoprotein family. In terms of assembly, homotrimer of disulfide-linked F1-F2. Post-translationally, the inactive precursor F0 is glycosylated and proteolytically cleaved into F1 and F2 to be functionally active. The cleavage is mediated by cellular proteases during the transport and maturation of the polypeptide.

It is found in the virion membrane. The protein localises to the host cell membrane. Class I viral fusion protein. Under the current model, the protein has at least 3 conformational states: pre-fusion native state, pre-hairpin intermediate state, and post-fusion hairpin state. During viral and plasma cell membrane fusion, the heptad repeat (HR) regions assume a trimer-of-hairpins structure, positioning the fusion peptide in close proximity to the C-terminal region of the ectodomain. The formation of this structure appears to drive apposition and subsequent fusion of viral and plasma cell membranes. Directs fusion of viral and cellular membranes leading to delivery of the nucleocapsid into the cytoplasm. This fusion is pH independent and occurs directly at the outer cell membrane. The trimer of F1-F2 (F protein) probably interacts with HN at the virion surface. Upon HN binding to its cellular receptor, the hydrophobic fusion peptide is unmasked and interacts with the cellular membrane, inducing the fusion between cell and virion membranes. Later in infection, F proteins expressed at the plasma membrane of infected cells could mediate fusion with adjacent cells to form syncytia, a cytopathic effect that could lead to tissue necrosis. The polypeptide is Fusion glycoprotein F0 (F) (Gallus gallus (Chicken)).